The primary structure comprises 507 residues: Fumarate hydratase, mitochondrial (507 aa).

The transit peptide at 1-41 (MNRAFCLLARSRRFPRVPSAGAVLSGEAATLPRCAPNVVRM) directs the protein to the mitochondrion. N6-acetyllysine; alternate is present on residues Lys-58, Lys-63, and Lys-77. An N6-succinyllysine; alternate mark is found at Lys-58, Lys-63, and Lys-77. The residue at position 82 (Thr-82) is a Phosphothreonine. Lys-91 is subject to N6-acetyllysine. Residues Lys-112 and Lys-119 each carry the N6-acetyllysine; alternate modification. N6-succinyllysine; alternate occurs at positions 112 and 119. Residues 142 to 144 (SGT), 173 to 176 (HPND), and 183 to 185 (SSN) each bind substrate. Lys-210 is modified (N6-acetyllysine). Residue Lys-220 is modified to N6-acetyllysine; alternate. Lys-220 bears the N6-succinyllysine; alternate mark. Residue Thr-231 participates in substrate binding. His-232 serves as the catalytic Proton donor/acceptor. At Thr-233 the chain carries Phosphothreonine. At Lys-289 the chain carries N6-acetyllysine; alternate. Lys-289 is modified (N6-succinyllysine; alternate). Residue Ser-362 is part of the active site. Substrate is bound by residues Ser-363 and 368–370 (KVN). Ser-363 carries the phosphoserine modification. An N6-succinyllysine mark is found at Lys-464 and Lys-470. Lys-499 bears the N6-acetyllysine mark.

This sequence belongs to the class-II fumarase/aspartase family. Fumarase subfamily. As to quaternary structure, homotetramer. Interacts with H2AZ1. Post-translationally, phosphorylation at Thr-233 by PRKDC in response to DNA damage promotes translocation to the nucleus and recruitment to DNA double-strand breaks (DSBs).

Its subcellular location is the mitochondrion. The protein resides in the cytoplasm. It localises to the cytosol. The protein localises to the nucleus. It is found in the chromosome. The enzyme catalyses (S)-malate = fumarate + H2O. Its pathway is carbohydrate metabolism; tricarboxylic acid cycle; (S)-malate from fumarate: step 1/1. Catalyzes the reversible stereospecific interconversion of fumarate to L-malate. Experiments in other species have demonstrated that specific isoforms of this protein act in defined pathways and favor one direction over the other. Functionally, catalyzes the hydration of fumarate to L-malate in the tricarboxylic acid (TCA) cycle to facilitate a transition step in the production of energy in the form of NADH. In terms of biological role, catalyzes the dehydration of L-malate to fumarate. Fumarate metabolism in the cytosol plays a role during urea cycle and arginine metabolism; fumarate being a by-product of the urea cycle and amino-acid catabolism. Also plays a role in DNA repair by promoting non-homologous end-joining (NHEJ). In response to DNA damage and phosphorylation by PRKDC, translocates to the nucleus and accumulates at DNA double-strand breaks (DSBs): acts by catalyzing formation of fumarate, an inhibitor of KDM2B histone demethylase activity, resulting in enhanced dimethylation of histone H3 'Lys-36' (H3K36me2). This chain is Fumarate hydratase, mitochondrial, found in Rattus norvegicus (Rat).